Here is a 242-residue protein sequence, read N- to C-terminus: Uridylate kinase (242 aa).

ATP is bound at residue 11-14 (KLSG). The tract at residues 19-24 (GNMGYG) is involved in allosteric activation by GTP. Gly-53 provides a ligand contact to UMP. ATP contacts are provided by Gly-54 and Arg-58. UMP is bound by residues Asp-73 and 134-141 (SGNPFFTT). ATP contacts are provided by Thr-161, Tyr-167, and Asp-170.

The protein belongs to the UMP kinase family. In terms of assembly, homohexamer.

The protein localises to the cytoplasm. The enzyme catalyses UMP + ATP = UDP + ADP. It functions in the pathway pyrimidine metabolism; CTP biosynthesis via de novo pathway; UDP from UMP (UMPK route): step 1/1. With respect to regulation, allosterically activated by GTP. Inhibited by UTP. In terms of biological role, catalyzes the reversible phosphorylation of UMP to UDP. The polypeptide is Uridylate kinase (Trichormus variabilis (strain ATCC 29413 / PCC 7937) (Anabaena variabilis)).